The chain runs to 413 residues: Serine hydroxymethyltransferase (413 aa).

Residues Leu-117 and 121–123 (GHL) each bind (6S)-5,6,7,8-tetrahydrofolate. Lys-226 carries the post-translational modification N6-(pyridoxal phosphate)lysine. 349 to 351 (SPF) is a (6S)-5,6,7,8-tetrahydrofolate binding site.

Belongs to the SHMT family. Homodimer. Pyridoxal 5'-phosphate is required as a cofactor.

The protein localises to the cytoplasm. The enzyme catalyses (6R)-5,10-methylene-5,6,7,8-tetrahydrofolate + glycine + H2O = (6S)-5,6,7,8-tetrahydrofolate + L-serine. It functions in the pathway one-carbon metabolism; tetrahydrofolate interconversion. Its pathway is amino-acid biosynthesis; glycine biosynthesis; glycine from L-serine: step 1/1. In terms of biological role, catalyzes the reversible interconversion of serine and glycine with tetrahydrofolate (THF) serving as the one-carbon carrier. This reaction serves as the major source of one-carbon groups required for the biosynthesis of purines, thymidylate, methionine, and other important biomolecules. Also exhibits THF-independent aldolase activity toward beta-hydroxyamino acids, producing glycine and aldehydes, via a retro-aldol mechanism. This Listeria monocytogenes serovar 1/2a (strain ATCC BAA-679 / EGD-e) protein is Serine hydroxymethyltransferase.